The sequence spans 2207 residues: Desmoplakin-B (2207 aa).

Coiled coils occupy residues M506–K916, A952–R1000, and T1029–N1063. Residues K905–L924 are compositionally biased toward basic and acidic residues. The tract at residues K905–E933 is disordered. Plectin repeat units follow at residues L1369–Q1406, L1407–L1445, L1446–L1483, Y1571–L1609, L1610–L1647, L1685–L1723, I1783–L1811, L1992–R2029, and F2068–L2106. Over residues I2155–P2164 the composition is skewed to polar residues. Positions I2155–S2207 are disordered. The segment covering G2165 to S2207 has biased composition (low complexity).

Belongs to the plakin or cytolinker family.

The protein resides in the cell junction. Its subcellular location is the desmosome. The protein localises to the cell membrane. Its function is as follows. Involved in the organization of desmosome cell-cell junctions. Of particular importance in cell adhesion in the skin and during cardiac development. May also play a role in the regulation of Wnt, TGF-beta and Hippo signaling pathways. The polypeptide is Desmoplakin-B (Danio rerio (Zebrafish)).